The following is a 253-amino-acid chain: Blue-light photoreceptor (253 aa).

One can recognise a PAS domain in the interval K6–K79. Residue C56 is modified to S-4a-FMN cysteine. Residues S80–K133 form the PAC domain. One can recognise an STAS domain in the interval S142–Y253.

Post-translationally, FMN binds covalently to cysteine after exposure to blue light and this bond is spontaneously broken in the dark.

Its function is as follows. Exhibits the same spectroscopical features and blue-light induced photochemistry as plants phototropins, with the reversible formation of a blue-shifted photoproduct, assigned to an FMN-cysteine thiol adduct. Positive regulator in the activation of the general stress transcription factor sigma-B. This Listeria innocua serovar 6a (strain ATCC BAA-680 / CLIP 11262) protein is Blue-light photoreceptor.